The following is a 246-amino-acid chain: tRNA pseudouridine synthase A (246 aa).

D52 acts as the Nucleophile in catalysis. Position 111 (Y111) interacts with substrate.

It belongs to the tRNA pseudouridine synthase TruA family. As to quaternary structure, homodimer.

The catalysed reaction is uridine(38/39/40) in tRNA = pseudouridine(38/39/40) in tRNA. Formation of pseudouridine at positions 38, 39 and 40 in the anticodon stem and loop of transfer RNAs. The chain is tRNA pseudouridine synthase A from Fervidobacterium nodosum (strain ATCC 35602 / DSM 5306 / Rt17-B1).